Reading from the N-terminus, the 136-residue chain is Large ribosomal subunit protein uL16 (136 aa).

This sequence belongs to the universal ribosomal protein uL16 family. In terms of assembly, part of the 50S ribosomal subunit.

Its function is as follows. Binds 23S rRNA and is also seen to make contacts with the A and possibly P site tRNAs. In Rickettsia africae (strain ESF-5), this protein is Large ribosomal subunit protein uL16.